The primary structure comprises 202 residues: Small ribosomal subunit protein uS5 (202 aa).

An S5 DRBM domain is found at 46-109; it reads LKSEVLSVGF…RRAKLNIVPV (64 aa).

This sequence belongs to the universal ribosomal protein uS5 family. As to quaternary structure, part of the 30S ribosomal subunit. Contacts protein S4.

Functionally, with S4 and S12 plays an important role in translational accuracy. The sequence is that of Small ribosomal subunit protein uS5 from Thermofilum pendens (strain DSM 2475 / Hrk 5).